Consider the following 306-residue polypeptide: MELKQEMASLLKTSPNAVKKRLLHQIGLSLYNTSHGFHEEEVKKKLEQFPGGSIDLQKENSGIGILTLNNPSKMNAFSGVMMLQLLEKVIELENWTEGKGLIIRGAKNTFSSGSDLNAVKALGTPEDGMAVCMFMQNTLTRFMRLPLISVALVQGRALGGGAEVTTACDFRLMTTESEIRFVHKEMGIIPSWGGATRLVEIIGGRQALKVLSGALKLDSEKALNIGMVDDILPSSDETECLKEAQEWLQQFIKGPPEVIRALKKSVSSCKELCLEEALQRERDILGTVWGGPANLEAVARKGKFNK.

Lysine 216 is modified (N6-acetyllysine; alternate). Lysine 216 bears the N6-succinyllysine; alternate mark.

It belongs to the enoyl-CoA hydratase/isomerase family.

The protein resides in the cytoplasm. It localises to the cytosol. The enzyme catalyses (2S)-ethylmalonyl-CoA + H(+) = butanoyl-CoA + CO2. It carries out the reaction (S)-methylmalonyl-CoA + H(+) = propanoyl-CoA + CO2. The catalysed reaction is (2R)-ethylmalonyl-CoA + H(+) = butanoyl-CoA + CO2. Its function is as follows. Decarboxylates ethylmalonyl-CoA, a potentially toxic metabolite, to form butyryl-CoA, suggesting it might be involved in metabolite proofreading. Acts preferentially on (S)-ethylmalonyl-CoA but also has some activity on the (R)-isomer. Also has methylmalonyl-CoA decarboxylase activity at lower level. The polypeptide is Ethylmalonyl-CoA decarboxylase (ECHDC1) (Bos taurus (Bovine)).